The sequence spans 279 residues: MKTKLDFFKMKEQNEPIVMLTAYDYPSAKQAEKAEVDMILVGDSLGMVVLGLDSTIQVTIDDMIHHTKAVKRGAKDTFIVTDMPFMSYHYSLAETLKNAARIMQESGADALKLEGGDGVFESIQALTRGGIPVVSHLGLTPQSVGVLGGYKVQGKDHESAQKLIEDSLKCEEAGAIALVLECVPGELTKRITDMLKIPVIGIGAGAEADGQVLVYHDVVGYGVSRTPKFVKQYAQIDTLLEEALIQYTKEVKAHTFPEDKHTFHIKEEVLDGLYGGIKK.

Residues Asp-43 and Asp-82 each contribute to the Mg(2+) site. Residues 43–44, Asp-82, and Lys-112 each bind 3-methyl-2-oxobutanoate; that span reads DS. Glu-114 contacts Mg(2+). Glu-181 serves as the catalytic Proton acceptor.

It belongs to the PanB family. Homodecamer; pentamer of dimers. It depends on Mg(2+) as a cofactor.

The protein resides in the cytoplasm. The catalysed reaction is 3-methyl-2-oxobutanoate + (6R)-5,10-methylene-5,6,7,8-tetrahydrofolate + H2O = 2-dehydropantoate + (6S)-5,6,7,8-tetrahydrofolate. It functions in the pathway cofactor biosynthesis; (R)-pantothenate biosynthesis; (R)-pantoate from 3-methyl-2-oxobutanoate: step 1/2. Functionally, catalyzes the reversible reaction in which hydroxymethyl group from 5,10-methylenetetrahydrofolate is transferred onto alpha-ketoisovalerate to form ketopantoate. The protein is 3-methyl-2-oxobutanoate hydroxymethyltransferase of Bacillus pumilus (strain SAFR-032).